We begin with the raw amino-acid sequence, 269 residues long: Energy-coupling factor transporter ATP-binding protein EcfA1 (269 aa).

An ABC transporter domain is found at 8-242 (IVFKNVSFQY…AEGLTTIGLD (235 aa)). Residue 42–49 (GHNGSGKS) coordinates ATP.

The protein belongs to the ABC transporter superfamily. Energy-coupling factor EcfA family. Forms a stable energy-coupling factor (ECF) transporter complex composed of 2 membrane-embedded substrate-binding proteins (S component), 2 ATP-binding proteins (A component) and 2 transmembrane proteins (T component).

The protein resides in the cell membrane. In terms of biological role, ATP-binding (A) component of a common energy-coupling factor (ECF) ABC-transporter complex. Unlike classic ABC transporters this ECF transporter provides the energy necessary to transport a number of different substrates. The sequence is that of Energy-coupling factor transporter ATP-binding protein EcfA1 from Staphylococcus aureus (strain bovine RF122 / ET3-1).